The following is a 210-amino-acid chain: 3 beta-hydroxysteroid dehydrogenase/Delta 5--&gt;4-isomerase (210 aa).

Tyrosine 29 (proton acceptor) is an active-site residue. Lysine 33 contributes to the NAD(+) binding site.

It belongs to the 3-beta-HSD family.

It catalyses the reaction a 3beta-hydroxy-Delta(5)-steroid + NAD(+) = a 3-oxo-Delta(5)-steroid + NADH + H(+). The enzyme catalyses a 3-oxo-Delta(5)-steroid = a 3-oxo-Delta(4)-steroid. It participates in lipid metabolism; steroid biosynthesis. Catalyzes the oxidative conversion of Delta(5)-ene-3-beta-hydroxy steroid, and the oxidative conversion of ketosteroids. The 3-beta-HSD enzymatic system plays a crucial role in the biosynthesis of all classes of hormonal steroids. During viral infection, steroid production contributes to virulence by inhibiting the host inflammatory response. This is 3 beta-hydroxysteroid dehydrogenase/Delta 5--&gt;4-isomerase (OPG174) from Variola virus (isolate Human/India/Ind3/1967) (VARV).